The sequence spans 482 residues: tRNA sulfurtransferase (482 aa).

In terms of domain architecture, THUMP spans 61-165 (DLVRDALTRI…DDRLLLVRGR (105 aa)). ATP-binding positions include 183 to 184 (LI), Lys-265, Gly-287, and Gln-296. Cys-344 and Cys-456 are disulfide-bonded. In terms of domain architecture, Rhodanese spans 404–482 (LAEGDVVLDI…GYDNVRVYRP (79 aa)). Catalysis depends on Cys-456, which acts as the Cysteine persulfide intermediate.

The protein belongs to the ThiI family.

It localises to the cytoplasm. The enzyme catalyses [ThiI sulfur-carrier protein]-S-sulfanyl-L-cysteine + a uridine in tRNA + 2 reduced [2Fe-2S]-[ferredoxin] + ATP + H(+) = [ThiI sulfur-carrier protein]-L-cysteine + a 4-thiouridine in tRNA + 2 oxidized [2Fe-2S]-[ferredoxin] + AMP + diphosphate. The catalysed reaction is [ThiS sulfur-carrier protein]-C-terminal Gly-Gly-AMP + S-sulfanyl-L-cysteinyl-[cysteine desulfurase] + AH2 = [ThiS sulfur-carrier protein]-C-terminal-Gly-aminoethanethioate + L-cysteinyl-[cysteine desulfurase] + A + AMP + 2 H(+). It participates in cofactor biosynthesis; thiamine diphosphate biosynthesis. Its function is as follows. Catalyzes the ATP-dependent transfer of a sulfur to tRNA to produce 4-thiouridine in position 8 of tRNAs, which functions as a near-UV photosensor. Also catalyzes the transfer of sulfur to the sulfur carrier protein ThiS, forming ThiS-thiocarboxylate. This is a step in the synthesis of thiazole, in the thiamine biosynthesis pathway. The sulfur is donated as persulfide by IscS. The polypeptide is tRNA sulfurtransferase (Edwardsiella ictaluri (strain 93-146)).